The primary structure comprises 188 residues: UPF0461 protein C5orf24 homolog (188 aa).

Ser-37 is modified (phosphoserine). Lys-75 is covalently cross-linked (Glycyl lysine isopeptide (Lys-Gly) (interchain with G-Cter in SUMO2)). Residues 80-92 are compositionally biased toward basic residues; it reads KKKNLNRSGKRGR. A disordered region spans residues 80–141; sequence KKKNLNRSGK…AGYKVSPGRP (62 aa). Residues 94–107 are compositionally biased toward polar residues; the sequence is SGTTKSAGYRTSTG. 2 positions are modified to phosphoserine: Ser-121 and Ser-180. A Glycyl lysine isopeptide (Lys-Gly) (interchain with G-Cter in SUMO2) cross-link involves residue Lys-184.

Belongs to the UPF0461 family.

In Mus musculus (Mouse), this protein is UPF0461 protein C5orf24 homolog.